The sequence spans 720 residues: DNA replication licensing factor mcm7-A (720 aa).

A C4-type zinc finger spans residues 183–210; that stretch reads CDQCGAETYQPIQSPTFMPLIMCPSREC. Residues 331–537 enclose the MCM domain; that stretch reads FYEKLAASIA…NDLRLAQHIT (207 aa). ATP is bound by residues Y344, G383, A385, K386, S387, N488, R513, and R603. An Arginine finger motif is present at residues 512 to 515; sequence SRFD.

Belongs to the MCM family. Component of the mcm2-7 complex (RLF-M). The complex forms a toroidal hexameric ring with the proposed subunit order mcm2-mcm6-mcm4-mcm7-mcm3-mcm5. The heterodimer of mmcm3/mcm5 interacts with mcm4, mmcm6, mcm7 and weakly with mcm2. The N-terminus is required for interaction with mmcm3, though this interaction may not be direct, and remains in a complex with mmcm3 throughout the cell cycle. Begins to associate with zmcm6 at the neurula stage. Component of the replisome complex. Component of the CMG helicase complex, composed of the mcm2-7 complex, the GINS complex and cdc45. In terms of processing, ubiquitinated by traip when forks converge following formation of DNA interstrand cross-links. Ubiquitinated via 'Lys-6'- and 'Lys-63'-linked polyubiquitination by traip. Short ubiquitin chains on mcm7 promote recruitment of DNA glycosylase neil3. If the interstrand cross-link cannot be cleaved by neil3, the ubiquitin chains continue to grow on mcm7, promoting the unloading of the CMG helicase complex by the vcp/p97 ATPase.

The protein localises to the nucleus. The protein resides in the chromosome. The catalysed reaction is ATP + H2O = ADP + phosphate + H(+). Its function is as follows. Acts as a component of the mcm2-7 complex (mcm complex) which is the putative replicative helicase essential for 'once per cell cycle' DNA replication initiation and elongation in eukaryotic cells. The active ATPase sites in the mcm2-7 ring are formed through the interaction surfaces of two neighboring subunits such that a critical structure of a conserved arginine finger motif is provided in trans relative to the ATP-binding site of the Walker A box of the adjacent subunit. The six ATPase active sites, however, are likely to contribute differentially to the complex helicase activity. The existence of maternal and zygotic forms of mcm3 and mcm6 suggests that specific forms of mcm2-7 complexes may be used during different stages of development. In Xenopus laevis (African clawed frog), this protein is DNA replication licensing factor mcm7-A (mcm7-a).